The primary structure comprises 186 residues: Potassium-transporting ATPase KdpC subunit (186 aa).

Residues leucine 10–glycine 30 form a helical membrane-spanning segment.

Belongs to the KdpC family. In terms of assembly, the system is composed of three essential subunits: KdpA, KdpB and KdpC.

It is found in the cell membrane. In terms of biological role, part of the high-affinity ATP-driven potassium transport (or Kdp) system, which catalyzes the hydrolysis of ATP coupled with the electrogenic transport of potassium into the cytoplasm. This subunit acts as a catalytic chaperone that increases the ATP-binding affinity of the ATP-hydrolyzing subunit KdpB by the formation of a transient KdpB/KdpC/ATP ternary complex. The chain is Potassium-transporting ATPase KdpC subunit from Staphylococcus aureus (strain bovine RF122 / ET3-1).